A 194-amino-acid polypeptide reads, in one-letter code: MIGRLRGVLTSKTPPWLVVDVCGVGYELEVPMSTFCELPDVGYEVNLFTHYTQKDDSAALYGFLSESERRLFRHLQRVSGIGTKIALAILSSVSVDTFAGLIQAGDANALTVIPGVGKKTAERMLVELRDRAADFNNGISTSGKLNLDTVSEAALALQQLGYKPAEAARMARDAGTESDDVAIVIKKALQTVLR.

The interval 1–64 (MIGRLRGVLT…DDSAALYGFL (64 aa)) is domain I. The domain II stretch occupies residues 65–140 (SESERRLFRH…RAADFNNGIS (76 aa)). Residues 140 to 144 (STSGK) form a flexible linker region. Positions 145-194 (LNLDTVSEAALALQQLGYKPAEAARMARDAGTESDDVAIVIKKALQTVLR) are domain III.

Belongs to the RuvA family. Homotetramer. Forms an RuvA(8)-RuvB(12)-Holliday junction (HJ) complex. HJ DNA is sandwiched between 2 RuvA tetramers; dsDNA enters through RuvA and exits via RuvB. An RuvB hexamer assembles on each DNA strand where it exits the tetramer. Each RuvB hexamer is contacted by two RuvA subunits (via domain III) on 2 adjacent RuvB subunits; this complex drives branch migration. In the full resolvosome a probable DNA-RuvA(4)-RuvB(12)-RuvC(2) complex forms which resolves the HJ.

The protein localises to the cytoplasm. The RuvA-RuvB-RuvC complex processes Holliday junction (HJ) DNA during genetic recombination and DNA repair, while the RuvA-RuvB complex plays an important role in the rescue of blocked DNA replication forks via replication fork reversal (RFR). RuvA specifically binds to HJ cruciform DNA, conferring on it an open structure. The RuvB hexamer acts as an ATP-dependent pump, pulling dsDNA into and through the RuvAB complex. HJ branch migration allows RuvC to scan DNA until it finds its consensus sequence, where it cleaves and resolves the cruciform DNA. This Xylella fastidiosa (strain M23) protein is Holliday junction branch migration complex subunit RuvA.